The sequence spans 454 residues: tRNA modification GTPase MnmE (454 aa).

Residues arginine 23, glutamate 80, and lysine 120 each coordinate (6S)-5-formyl-5,6,7,8-tetrahydrofolate. A TrmE-type G domain is found at 216 to 377 (GMKVVIAGRP…LRNHLKQSMG (162 aa)). Residue asparagine 226 coordinates K(+). Residues 226 to 231 (NAGKSS), 245 to 251 (TDIAGTT), 270 to 273 (DTAG), 335 to 338 (NKAD), and 358 to 360 (SAR) contribute to the GTP site. Serine 230 is a Mg(2+) binding site. 3 residues coordinate K(+): threonine 245, isoleucine 247, and threonine 250. Residue threonine 251 coordinates Mg(2+). A (6S)-5-formyl-5,6,7,8-tetrahydrofolate-binding site is contributed by lysine 454.

This sequence belongs to the TRAFAC class TrmE-Era-EngA-EngB-Septin-like GTPase superfamily. TrmE GTPase family. In terms of assembly, homodimer. Heterotetramer of two MnmE and two MnmG subunits. Requires K(+) as cofactor.

It is found in the cytoplasm. Functionally, exhibits a very high intrinsic GTPase hydrolysis rate. Involved in the addition of a carboxymethylaminomethyl (cmnm) group at the wobble position (U34) of certain tRNAs, forming tRNA-cmnm(5)s(2)U34. The chain is tRNA modification GTPase MnmE from Shigella boydii serotype 18 (strain CDC 3083-94 / BS512).